A 212-amino-acid polypeptide reads, in one-letter code: MSRRRRIGVMGGTFDPIHHGHLVAASEVQAQFGLEQVIFVPTGQPWQKTHEVVSPAEDRYLMTVVATASNPRFQVSRVDIDRAGPTYTADTLADLRALYPEAELYFITGADALEQILSWHRVDELFELAHFIGVTRPGYQLAGEHLPKGAVSLVEIPAMAISSTGCRQRVRAGLPVWYLVPDGIVQYIAKRGLYRGEDDSAGVEWGPRPSGT.

The protein belongs to the NadD family.

The enzyme catalyses nicotinate beta-D-ribonucleotide + ATP + H(+) = deamido-NAD(+) + diphosphate. Its pathway is cofactor biosynthesis; NAD(+) biosynthesis; deamido-NAD(+) from nicotinate D-ribonucleotide: step 1/1. Catalyzes the reversible adenylation of nicotinate mononucleotide (NaMN) to nicotinic acid adenine dinucleotide (NaAD). This chain is Probable nicotinate-nucleotide adenylyltransferase, found in Saccharopolyspora erythraea (strain ATCC 11635 / DSM 40517 / JCM 4748 / NBRC 13426 / NCIMB 8594 / NRRL 2338).